The sequence spans 183 residues: Translation initiation factor IF-3 (183 aa).

The span at 1-13 (MKQPDRNQQQGAK) shows a compositional bias: polar residues. The disordered stretch occupies residues 1–21 (MKQPDRNQQQGAKSNRPAIND).

It belongs to the IF-3 family. In terms of assembly, monomer.

Its subcellular location is the cytoplasm. Functionally, IF-3 binds to the 30S ribosomal subunit and shifts the equilibrium between 70S ribosomes and their 50S and 30S subunits in favor of the free subunits, thus enhancing the availability of 30S subunits on which protein synthesis initiation begins. This Acinetobacter baumannii (strain AYE) protein is Translation initiation factor IF-3.